A 485-amino-acid polypeptide reads, in one-letter code: Proline--tRNA ligase (485 aa).

The protein belongs to the class-II aminoacyl-tRNA synthetase family. ProS type 3 subfamily. Homodimer.

It localises to the cytoplasm. The catalysed reaction is tRNA(Pro) + L-proline + ATP = L-prolyl-tRNA(Pro) + AMP + diphosphate. Catalyzes the attachment of proline to tRNA(Pro) in a two-step reaction: proline is first activated by ATP to form Pro-AMP and then transferred to the acceptor end of tRNA(Pro). The polypeptide is Proline--tRNA ligase (Methanopyrus kandleri (strain AV19 / DSM 6324 / JCM 9639 / NBRC 100938)).